A 97-amino-acid polypeptide reads, in one-letter code: Venom peptide HsVx1 (97 aa).

An N-terminal signal peptide occupies residues M1–G20.

It belongs to the scorpion La1-like peptide family. Contains 4 disulfide bonds. As to expression, expressed by the venom gland.

Its subcellular location is the secreted. In Heterometrus spinifer (Asia giant forest scorpion), this protein is Venom peptide HsVx1.